Consider the following 389-residue polypeptide: Succinate--CoA ligase [ADP-forming] subunit beta (389 aa).

The 236-residue stretch at 9-244 (KAVLAKYGVP…LTEEDPAEVE (236 aa)) folds into the ATP-grasp domain. Residues lysine 46, 53–55 (GRG), glutamate 99, serine 102, and glutamate 107 contribute to the ATP site. Residues asparagine 199 and aspartate 213 each coordinate Mg(2+). Residues asparagine 264 and 321-323 (GIM) contribute to the substrate site.

This sequence belongs to the succinate/malate CoA ligase beta subunit family. As to quaternary structure, heterotetramer of two alpha and two beta subunits. Mg(2+) is required as a cofactor.

The catalysed reaction is succinate + ATP + CoA = succinyl-CoA + ADP + phosphate. The enzyme catalyses GTP + succinate + CoA = succinyl-CoA + GDP + phosphate. The protein operates within carbohydrate metabolism; tricarboxylic acid cycle; succinate from succinyl-CoA (ligase route): step 1/1. Functionally, succinyl-CoA synthetase functions in the citric acid cycle (TCA), coupling the hydrolysis of succinyl-CoA to the synthesis of either ATP or GTP and thus represents the only step of substrate-level phosphorylation in the TCA. The beta subunit provides nucleotide specificity of the enzyme and binds the substrate succinate, while the binding sites for coenzyme A and phosphate are found in the alpha subunit. In Parvibaculum lavamentivorans (strain DS-1 / DSM 13023 / NCIMB 13966), this protein is Succinate--CoA ligase [ADP-forming] subunit beta.